Here is a 123-residue protein sequence, read N- to C-terminus: WAP four-disulfide core domain protein 5 (123 aa).

The N-terminal stretch at 1–24 is a signal peptide; that stretch reads MRTQSLLLLGALLAVGSQLPAVFG. WAP domains lie at 27 to 74 and 75 to 121; these read KGEK…VPRV and SVKL…RDPA. 8 cysteine pairs are disulfide-bonded: C34/C62, C41/C66, C49/C61, C55/C70, C81/C109, C88/C113, C96/C108, and C102/C117.

The protein resides in the secreted. Putative acid-stable proteinase inhibitor. This is WAP four-disulfide core domain protein 5 (WFDC5) from Gorilla gorilla gorilla (Western lowland gorilla).